The sequence spans 545 residues: Glucose-6-phosphate isomerase 1 (545 aa).

Residue Glu-356 is the Proton donor of the active site. Active-site residues include His-387 and Lys-508.

This sequence belongs to the GPI family.

The protein resides in the cytoplasm. The catalysed reaction is alpha-D-glucose 6-phosphate = beta-D-fructose 6-phosphate. The protein operates within carbohydrate biosynthesis; gluconeogenesis. Its pathway is carbohydrate degradation; glycolysis; D-glyceraldehyde 3-phosphate and glycerone phosphate from D-glucose: step 2/4. In terms of biological role, catalyzes the reversible isomerization of glucose-6-phosphate to fructose-6-phosphate. In Cupriavidus pinatubonensis (strain JMP 134 / LMG 1197) (Cupriavidus necator (strain JMP 134)), this protein is Glucose-6-phosphate isomerase 1.